The chain runs to 197 residues: Large ribosomal subunit protein uL11 (197 aa).

This sequence belongs to the universal ribosomal protein uL11 family. In terms of assembly, part of the ribosomal stalk of the 50S ribosomal subunit. Interacts with L10 and the large rRNA to form the base of the stalk. L10 forms an elongated spine to which L12 dimers bind in a sequential fashion forming a multimeric L10(L12)X complex. One or more lysine residues are methylated.

Functionally, forms part of the ribosomal stalk which helps the ribosome interact with GTP-bound translation factors. The protein is Large ribosomal subunit protein uL11 of Mycoplasmopsis pulmonis (strain UAB CTIP) (Mycoplasma pulmonis).